The sequence spans 218 residues: Probable transaldolase (218 aa).

The Schiff-base intermediate with substrate role is filled by lysine 87.

The protein belongs to the transaldolase family. Type 3B subfamily.

Its subcellular location is the cytoplasm. The enzyme catalyses D-sedoheptulose 7-phosphate + D-glyceraldehyde 3-phosphate = D-erythrose 4-phosphate + beta-D-fructose 6-phosphate. It functions in the pathway carbohydrate degradation; pentose phosphate pathway; D-glyceraldehyde 3-phosphate and beta-D-fructose 6-phosphate from D-ribose 5-phosphate and D-xylulose 5-phosphate (non-oxidative stage): step 2/3. In terms of biological role, transaldolase is important for the balance of metabolites in the pentose-phosphate pathway. The chain is Probable transaldolase from Parabacteroides distasonis (strain ATCC 8503 / DSM 20701 / CIP 104284 / JCM 5825 / NCTC 11152).